Consider the following 253-residue polypeptide: DNA repair protein RecO (253 aa).

Belongs to the RecO family.

Functionally, involved in DNA repair and RecF pathway recombination. This chain is DNA repair protein RecO, found in Dehalococcoides mccartyi (strain ATCC BAA-2266 / KCTC 15142 / 195) (Dehalococcoides ethenogenes (strain 195)).